The sequence spans 96 residues: UPF0235 protein YggU (96 aa).

Belongs to the UPF0235 family.

In Salmonella arizonae (strain ATCC BAA-731 / CDC346-86 / RSK2980), this protein is UPF0235 protein YggU.